Here is a 623-residue protein sequence, read N- to C-terminus: MSSLPTSDGFNHQAHPSGQRPEIGSPPSLAHSVSASVCPFKPSDPDSIEPKAVKAVKALKASAEFQITFERKEQLPLQDPSDCASSADNAPANQTPAIPLQNSLKEAIVADNLEKSAEGSTQGLKSHLHTRQEASLSVTTTRMQEPQRLIGEKGWHPEYQDPSQVNGLQQHEEPRNEQHEVVQQNAPHDPEHLCNTGDLELLGERQQNQPKSVGLETAVRGDRPQQDVDLPGTEKNILPYGCFGCSSSETFMEIDTVEQSLVAVLNSAGGQNTSVRNISASDLTVDNPLMEVETLKCNPSSEFLSNPTSTQNLQLPESSVEMSGTNKEYGNHPSSLSLCGTCQPSVESAEESCSSITAALKELHELLVISSKPALENTSEEVTCRSEIVTEGQTDVKDLSERWTQSEHLTAAQNEQCSQVSFYQATSVSVKTEELTDTSTDAGTEDVENITSSGPGDGLLVDKENVPRSRESVNESSLVTLDSAKTSNQPHCTLGVEISPGLLAGEEGALNQTSEQTESLSSSFILVKDLGQGTQNPVTNRPETRENVCPEAAGLRQEFEPPTSHPSSSPSFLAPLIFPAADIDRILRAGFTLQEALGALHRVGGNADLALLVLLAKNIVVPT.

3 stretches are compositionally biased toward polar residues: residues 1-16 (MSSL…QAHP), 83-99 (CASS…PAIP), and 133-144 (EASLSVTTTRMQ). 4 disordered regions span residues 1-48 (MSSL…PDSI), 71-99 (RKEQ…PAIP), 116-189 (SAEG…APHD), and 433-493 (EELT…PHCT). Basic and acidic residues-rich tracts occupy residues 150-159 (IGEKGWHPEY), 170-180 (QHEEPRNEQHE), and 460-473 (LVDK…RESV). A compositionally biased stretch (polar residues) spans 474-491 (NESSLVTLDSAKTSNQPH). The 41-residue stretch at 577 to 617 (IFPAADIDRILRAGFTLQEALGALHRVGGNADLALLVLLAK) folds into the UBA domain.

As to quaternary structure, interacts with YRDC. As to expression, renal outer cortex and outer medulla, small intestine and liver.

Its subcellular location is the cell membrane. It localises to the nucleus. The protein localises to the golgi apparatus. The protein resides in the trans-Golgi network. Functionally, mediates transcriptional and post-transcriptional regulation of SLC5A1. Inhibits a dynamin and PKC-dependent exocytotic pathway of SLC5A1. Also involved in transcriptional regulation of SLC22A2. Exhibits glucose-dependent, short-term inhibition of SLC5A1 and SLC22A2 by inhibiting the release of vesicles from the trans-Golgi network. This Sus scrofa (Pig) protein is Regulatory solute carrier protein family 1 member 1 (RSC1A1).